A 234-amino-acid chain; its full sequence is Ponticulin-like protein J (234 aa).

Positions 1–20 (MRLLNNLILMVVLFVAVSNA) are cleaved as a signal peptide. 4 N-linked (GlcNAc...) asparagine glycosylation sites follow: Asn19, Asn143, Asn166, and Asn206. The disordered stretch occupies residues 115–213 (TIKCGTLPPD…SDNETAEGNN (99 aa)). The segment covering 154-195 (KSTPKSPSTPKTNNSNEDSDLTTSSSDSSSSTKSSPKSKSST) has biased composition (low complexity). A lipid anchor (GPI-like-anchor amidated asparagine) is attached at Asn212. N-linked (GlcNAc...) asparagine glycosylation is present at Asn213. Positions 213–234 (NASSNIATFSLVIISLLVASLF) are cleaved as a propeptide — removed in mature form.

This sequence belongs to the ponticulin family. The GPI-like-anchor contains a phosphoceramide group, rather than a phosphatidyl group.

The protein resides in the cell membrane. Binds F-actin and nucleates actin assembly. The protein is Ponticulin-like protein J (ponJ) of Dictyostelium discoideum (Social amoeba).